The primary structure comprises 213 residues: MESTDKLTDTNAILAYLYETFPLCFIAEGETKPLKIGLFQDLAERLADDSKVSKTQLRVALRRYTSSWRYLKSVKAGAQRVDLDGQPCGELEQEHIDHAQAMLKESQEKAKAKRAAQTPKAAPAGKAPAKKAPKKVAVPARKTERPAKAAPKVEPVVNLVQAQLTDLAKKQRVNVKLGMTPVAGVITDINKEDIHVQLDSGLTIKVKAEHILL.

Residues 105–150 are disordered; sequence ESQEKAKAKRAAQTPKAAPAGKAPAKKAPKKVAVPARKTERPAKAA. Positions 115-127 are enriched in low complexity; that stretch reads AAQTPKAAPAGKA.

Belongs to the ProQ family.

It localises to the cytoplasm. In terms of biological role, RNA chaperone with significant RNA binding, RNA strand exchange and RNA duplexing activities. This is RNA chaperone ProQ from Shewanella oneidensis (strain ATCC 700550 / JCM 31522 / CIP 106686 / LMG 19005 / NCIMB 14063 / MR-1).